A 254-amino-acid polypeptide reads, in one-letter code: Mediator of RNA polymerase II transcription subunit 6 (254 aa).

Positions 205–216 are enriched in polar residues; it reads ADSNRTCTTQST. A disordered region spans residues 205-254; it reads ADSNRTCTTQSTHTHHADDHTPQLEHQQDHIHPPPPAAFTQPQLKKARFD. Over residues 219 to 236 the composition is skewed to basic and acidic residues; the sequence is HHADDHTPQLEHQQDHIH.

This sequence belongs to the Mediator complex subunit 6 family. In terms of assembly, component of the Mediator complex.

Its subcellular location is the nucleus. Component of the Mediator complex, a coactivator involved in the regulated transcription of nearly all RNA polymerase II-dependent genes. Mediator functions as a bridge to convey information from gene-specific regulatory proteins to the basal RNA polymerase II transcription machinery. Mediator is recruited to promoters by direct interactions with regulatory proteins and serves as a scaffold for the assembly of a functional preinitiation complex with RNA polymerase II and the general transcription factors. This Mycosarcoma maydis (Corn smut fungus) protein is Mediator of RNA polymerase II transcription subunit 6 (MED6).